Consider the following 343-residue polypeptide: Ribosomal RNA small subunit methyltransferase C (343 aa).

This sequence belongs to the methyltransferase superfamily. RsmC family. In terms of assembly, monomer.

The protein localises to the cytoplasm. It catalyses the reaction guanosine(1207) in 16S rRNA + S-adenosyl-L-methionine = N(2)-methylguanosine(1207) in 16S rRNA + S-adenosyl-L-homocysteine + H(+). In terms of biological role, specifically methylates the guanine in position 1207 of 16S rRNA in the 30S particle. The chain is Ribosomal RNA small subunit methyltransferase C from Escherichia coli (strain K12 / DH10B).